The following is a 503-amino-acid chain: 2-phosphoxylose phosphatase 1 (503 aa).

Over 1–6 (MLARSR) the chain is Cytoplasmic. Residues 7–27 (FILVLVVGALLAVLSFSLQYL) traverse the membrane as a helical; Signal-anchor for type II membrane protein segment. Topologically, residues 28–503 (HLIPTNPVAE…YQQACHQTVL (476 aa)) are lumenal. Residues 38–63 (QRSAGRSRKRVNPVLHTDPPAPDPIR) form a disordered region. Asn-73 carries an N-linked (GlcNAc...) asparagine glycan. The active-site Nucleophile is the His-98. Residue Asn-365 is glycosylated (N-linked (GlcNAc...) asparagine). Asp-396 acts as the Proton donor in catalysis. Residue Asn-490 is glycosylated (N-linked (GlcNAc...) asparagine).

This sequence belongs to the histidine acid phosphatase family.

It localises to the golgi apparatus membrane. The catalysed reaction is 3-O-[beta-D-GlcA-(1-&gt;3)-beta-D-Gal-(1-&gt;3)-beta-D-Gal-(1-&gt;4)-beta-D-2-O-P-Xyl]-L-seryl-[protein] + H2O = 3-O-(beta-D-GlcA-(1-&gt;3)-beta-D-Gal-(1-&gt;3)-beta-D-Gal-(1-&gt;4)-beta-D-Xyl)-L-seryl-[protein] + phosphate. In terms of biological role, responsible for the 2-O-dephosphorylation of xylose in the glycosaminoglycan-protein linkage region of proteoglycans thereby regulating the amount of mature glycosaminoglycan (GAG) chains. Sulfated glycosaminoglycans (GAGs), including heparan sulfate and chondroitin sulfate, are synthesized on the so-called common GAG-protein linkage region (GlcUAbeta1-3Galbeta1-3Galbeta1-4Xylbeta1-O-Ser) of core proteins, which is formed by the stepwise addition of monosaccharide residues by the respective specific glycosyltransferases. In Danio rerio (Zebrafish), this protein is 2-phosphoxylose phosphatase 1.